A 194-amino-acid chain; its full sequence is Molybdenum cofactor guanylyltransferase (194 aa).

GTP-binding positions include 12–14 (LAG), K25, N53, D70, and D100. Residue D100 coordinates Mg(2+).

Belongs to the MobA family. Monomer. Mg(2+) serves as cofactor.

The protein localises to the cytoplasm. The enzyme catalyses Mo-molybdopterin + GTP + H(+) = Mo-molybdopterin guanine dinucleotide + diphosphate. Functionally, transfers a GMP moiety from GTP to Mo-molybdopterin (Mo-MPT) cofactor (Moco or molybdenum cofactor) to form Mo-molybdopterin guanine dinucleotide (Mo-MGD) cofactor. In Vibrio atlanticus (strain LGP32) (Vibrio splendidus (strain Mel32)), this protein is Molybdenum cofactor guanylyltransferase.